Consider the following 422-residue polypeptide: Nuclear hormone receptor family member nhr-54 (422 aa).

A DNA-binding region (nuclear receptor) is located at residues 14 to 92 (SVKCAICYKA…LGMTTENVRT (79 aa)). NR C4-type zinc fingers lie at residues 17-37 (CAICYKAGHGQHFGVETCRAC) and 53-80 (CTRKSGKCKIGSDETKDVMCKFCRFKKC). The region spanning 161–422 (PDDDVIVELN…VFTEPEFFRV (262 aa)) is the NR LBD domain.

The protein belongs to the nuclear hormone receptor family.

The protein resides in the nucleus. Functionally, orphan nuclear receptor. The polypeptide is Nuclear hormone receptor family member nhr-54 (nhr-54) (Caenorhabditis elegans).